Here is a 36-residue protein sequence, read N- to C-terminus: Toxin Iob1 (36 aa).

3 disulfides stabilise this stretch: cysteine 6/cysteine 21, cysteine 13/cysteine 26, and cysteine 20/cysteine 33.

It localises to the secreted. Binds reversibly and blocks N-type voltage-gated calcium channels (Cav). The chain is Toxin Iob1 from Isyndus obscurus (Assassin bug).